The sequence spans 264 residues: Undecaprenyl-diphosphatase (264 aa).

Transmembrane regions (helical) follow at residues 7-27 (VVILGFIQGIAEFLPISSSGH), 39-59 (LPIVFDIYLHLATVLVVMIYY), 89-109 (ILLILIITIITAFIGIFIEMF), 112-132 (LFTLNLVLINFIVTSILLFLL), 145-165 (ILLAGCLIGTMQGIGAMPGIS), 182-202 (SESFEISFLSLIPIVFGSLLL), 212-232 (MLFSIFEINLGAIIAFLVGLF), and 244-264 (SKLYYFSVYLIILVSLVYFLF).

It belongs to the UppP family.

It is found in the cell inner membrane. It catalyses the reaction di-trans,octa-cis-undecaprenyl diphosphate + H2O = di-trans,octa-cis-undecaprenyl phosphate + phosphate + H(+). Catalyzes the dephosphorylation of undecaprenyl diphosphate (UPP). Confers resistance to bacitracin. In Borrelia hermsii (strain HS1 / DAH), this protein is Undecaprenyl-diphosphatase.